Reading from the N-terminus, the 514-residue chain is Peptide chain release factor 3 (514 aa).

One can recognise a tr-type G domain in the interval 8-268 (KKRRTFAIIS…TFLKFAPEPH (261 aa)). Residues 17-24 (SHPDAGKT), 85-89 (DTPGH), and 139-142 (NKLD) each bind GTP.

Belongs to the TRAFAC class translation factor GTPase superfamily. Classic translation factor GTPase family. PrfC subfamily.

It is found in the cytoplasm. Increases the formation of ribosomal termination complexes and stimulates activities of RF-1 and RF-2. It binds guanine nucleotides and has strong preference for UGA stop codons. It may interact directly with the ribosome. The stimulation of RF-1 and RF-2 is significantly reduced by GTP and GDP, but not by GMP. The polypeptide is Peptide chain release factor 3 (Streptococcus thermophilus (strain CNRZ 1066)).